Reading from the N-terminus, the 189-residue chain is Holliday junction branch migration complex subunit RuvA (189 aa).

The domain I stretch occupies residues 1–63 (MIHALNGKVE…DDGISLYGFL (63 aa)). The domain II stretch occupies residues 64–135 (EVIKLKLFEK…ELKDTIKELD (72 aa)). The interval 135–139 (DVSIN) is flexible linker. A domain III region spans residues 140–189 (EKDRKVLEAIEALVTLGFNRNQAKKAVNKVAAKDDKLDDIIKKALRFLSR).

Belongs to the RuvA family. Homotetramer. Forms an RuvA(8)-RuvB(12)-Holliday junction (HJ) complex. HJ DNA is sandwiched between 2 RuvA tetramers; dsDNA enters through RuvA and exits via RuvB. An RuvB hexamer assembles on each DNA strand where it exits the tetramer. Each RuvB hexamer is contacted by two RuvA subunits (via domain III) on 2 adjacent RuvB subunits; this complex drives branch migration. In the full resolvosome a probable DNA-RuvA(4)-RuvB(12)-RuvC(2) complex forms which resolves the HJ.

Its subcellular location is the cytoplasm. Its function is as follows. The RuvA-RuvB-RuvC complex processes Holliday junction (HJ) DNA during genetic recombination and DNA repair, while the RuvA-RuvB complex plays an important role in the rescue of blocked DNA replication forks via replication fork reversal (RFR). RuvA specifically binds to HJ cruciform DNA, conferring on it an open structure. The RuvB hexamer acts as an ATP-dependent pump, pulling dsDNA into and through the RuvAB complex. HJ branch migration allows RuvC to scan DNA until it finds its consensus sequence, where it cleaves and resolves the cruciform DNA. The protein is Holliday junction branch migration complex subunit RuvA of Thermosipho africanus (strain TCF52B).